Reading from the N-terminus, the 215-residue chain is Ribonuclease S-6 (215 aa).

Positions methionine 1–glycine 22 are cleaved as a signal peptide. Glutamine 32 lines the RNA pocket. Cysteine 38 and cysteine 43 are oxidised to a cystine. Asparagine 49 is a glycosylation site (N-linked (GlcNAc...) asparagine). An RNA-binding site is contributed by histidine 53. Histidine 53 functions as the Proton donor in the catalytic mechanism. Asparagine 59 carries an N-linked (GlcNAc...) asparagine glycan. Cysteines 67 and 116 form a disulfide. RNA-binding positions include aspartate 91–leucine 92, arginine 94, phenylalanine 105, arginine 108–glutamate 109, and lysine 112–histidine 113. The active site involves glutamate 109. Histidine 113 functions as the Proton acceptor in the catalytic mechanism. 2 N-linked (GlcNAc...) asparagine glycosylation sites follow: asparagine 160 and asparagine 172. 2 disulfide bridges follow: cysteine 175–cysteine 204 and cysteine 187–cysteine 198.

This sequence belongs to the RNase T2 family.

The protein localises to the secreted. It localises to the extracellular space. It carries out the reaction a ribonucleotidyl-ribonucleotide-RNA + H2O = a 3'-end 3'-phospho-ribonucleotide-RNA + a 5'-end dephospho-ribonucleoside-RNA + H(+). Functionally, self-incompatibility (SI) is the inherited ability of a flowering plant to prevent self-fertilization by discriminating between self and non-self pollen during pollination. In many species of the Solanaceae, self-incompatibility is controlled by the single, multiallelic locus S. This stylar glycoprotein is associated with expression of self-incompatibility in potato. This is Ribonuclease S-6 from Nicotiana alata (Winged tobacco).